The following is a 338-amino-acid chain: tRNA-specific 2-thiouridylase MnmA (338 aa).

Residues 6–13 (AMSGGVDS) and methionine 32 each bind ATP. The active-site Nucleophile is the cysteine 92. Residues cysteine 92 and cysteine 186 are joined by a disulfide bond. Glycine 116 contributes to the ATP binding site. Residues 134 to 136 (KDQ) form an interaction with tRNA region. The Cysteine persulfide intermediate role is filled by cysteine 186. Residues 288–289 (RY) form an interaction with tRNA region.

The protein belongs to the MnmA/TRMU family.

The protein resides in the cytoplasm. It catalyses the reaction S-sulfanyl-L-cysteinyl-[protein] + uridine(34) in tRNA + AH2 + ATP = 2-thiouridine(34) in tRNA + L-cysteinyl-[protein] + A + AMP + diphosphate + H(+). Catalyzes the 2-thiolation of uridine at the wobble position (U34) of tRNA, leading to the formation of s(2)U34. This chain is tRNA-specific 2-thiouridylase MnmA, found in Campylobacter jejuni subsp. jejuni serotype O:6 (strain 81116 / NCTC 11828).